Reading from the N-terminus, the 305-residue chain is Dihydroorotate dehydrogenase B (NAD(+)), catalytic subunit (305 aa).

Residues Ser21 and 45 to 46 (KA) each bind FMN. Substrate-binding positions include Lys45 and 69-73 (NAIGL). Residues Asn99 and Asn127 each coordinate FMN. Asn127 serves as a coordination point for substrate. Cys130 serves as the catalytic Nucleophile. Residues Lys165 and Ile190 each contribute to the FMN site. A substrate-binding site is contributed by 191-192 (NT). FMN contacts are provided by residues Gly216, 242–243 (GG), and 264–265 (GT).

Belongs to the dihydroorotate dehydrogenase family. Type 1 subfamily. Heterotetramer of 2 PyrK and 2 PyrD type B subunits. It depends on FMN as a cofactor.

It localises to the cytoplasm. The catalysed reaction is (S)-dihydroorotate + NAD(+) = orotate + NADH + H(+). The protein operates within pyrimidine metabolism; UMP biosynthesis via de novo pathway; orotate from (S)-dihydroorotate (NAD(+) route): step 1/1. Catalyzes the conversion of dihydroorotate to orotate with NAD(+) as electron acceptor. This is Dihydroorotate dehydrogenase B (NAD(+)), catalytic subunit (pyrD) from Staphylococcus carnosus (strain TM300).